The primary structure comprises 368 residues: Core-capsid bridging protein (368 aa).

Disordered stretches follow at residues 17-49 (EIYGPPKKEEQDYKPRKLKRVKKKKKDDDDELD) and 307-340 (GYRGYTYRPRRRATTRRRTTTGTRRRRRRRQPVL). Residues 22–31 (PKKEEQDYKP) show a composition bias toward basic and acidic residues. Composition is skewed to basic residues over residues 32 to 41 (RKLKRVKKKK) and 314 to 337 (RPRRRATTRRRTTTGTRRRRRRRQ).

Belongs to the adenoviridae core-capsid bridging protein family. Monomer. Homodimer. Exists in equilibrium between monomers and dimers in solution. Interacts with the histone-like nucleoprotein; this interactions bridge the virus core to the capsid. Interacts with core protein X; this interactions bridge the virus core to the capsid. Interacts with the endosome lysis protein VI; this interactions bridge the virus core to the capsid. Interacts with the peripentonal hexons. Interacts with host NPM1; this interaction might play a role in virus assembly. In terms of processing, during virion entry, is ubiquitinated at the nuclear pore complex by host MIB1. This dissociates viral genomic DNA from capsid and allows genome delivery into nucleus for infection.

It localises to the virion. The protein localises to the host nucleus. Its subcellular location is the host nucleolus. Its function is as follows. Associates loosely with the viral DNA to form an outer shell around the nucleoprotein-DNA complex and links it with the capsid by binding the endosome lysis protein. During entry, secures the viral genome in the capsid until it reaches the nuclear pore complex, preventing innate immunity responses. Dissociates from the viral genome at nuclear pore. Might be involved in nuclear capsid assembly of the viral particles through its association with NPM1/nucleophosmin. This chain is Core-capsid bridging protein, found in Human adenovirus C serotype 5 (HAdV-5).